Consider the following 270-residue polypeptide: Phospholipase A and acyltransferase 5 (270 aa).

Disordered stretches follow at residues 1–54 (MGLS…SASS) and 70–122 (RRLE…NPRP). 2 stretches are compositionally biased toward polar residues: residues 24–54 (TQISKTSSTESSDTQSATGQSTVPHSDSASS) and 100–116 (IPTSNSEIESTQKNQAV). The LRAT domain occupies 127-240 (LIEIFRIGYE…LRYGVPRSQQ (114 aa)). Active-site residues include H137 and H149. The active-site Acyl-thioester intermediate is C224.

The protein belongs to the H-rev107 family. In terms of tissue distribution, isoform 4 shows highest expression level in testis.

It is found in the cytoplasm. Its subcellular location is the cytosol. The catalysed reaction is a 1,2-diacyl-sn-glycero-3-phosphocholine + H2O = a 1-acyl-sn-glycero-3-phosphocholine + a fatty acid + H(+). It carries out the reaction a 1,2-diacyl-sn-glycero-3-phosphocholine + H2O = a 2-acyl-sn-glycero-3-phosphocholine + a fatty acid + H(+). It catalyses the reaction 1-hexadecanoyl-2-(5Z,8Z,11Z,14Z-eicosatetraenoyl)-sn-glycero-3-phosphocholine + 1,2-di-(9Z-octadecenoyl)-sn-glycero-3-phosphoethanolamine = N-(5Z,8Z,11Z,14Z-eicosatetraenoyl)-1,2-di-(9Z-octadecenoyl)-sn-glycero-3-phosphoethanolamine + 1-hexadecanoyl-sn-glycero-3-phosphocholine + H(+). The enzyme catalyses 1,2-di-(9Z-octadecenoyl)-sn-glycero-3-phosphoethanolamine + 1,2-dihexadecanoyl-sn-glycero-3-phosphocholine = N-hexadecanoyl-1,2-di-(9Z-octadecenoyl)-sn-glycero-3-phosphoethanolamine + 1-hexadecanoyl-sn-glycero-3-phosphocholine + H(+). The catalysed reaction is 1,2-di-(9Z-octadecenoyl)-sn-glycero-3-phosphoethanolamine + 1,2-dihexadecanoyl-sn-glycero-3-phosphocholine = N-hexadecanoyl-1,2-di-(9Z-octadecenoyl)-sn-glycero-3-phosphoethanolamine + 2-hexadecanoyl-sn-glycero-3-phosphocholine + H(+). It carries out the reaction a 1,2-diacyl-sn-glycero-3-phosphoethanolamine + a 1,2-diacyl-sn-glycero-3-phosphocholine = an N-acyl-1,2-diacyl-sn-glycero-3-phosphoethanolamine + a 1-acyl-sn-glycero-3-phosphocholine + H(+). It catalyses the reaction a 1,2-diacyl-sn-glycero-3-phosphoethanolamine + a 1,2-diacyl-sn-glycero-3-phosphocholine = an N-acyl-1,2-diacyl-sn-glycero-3-phosphoethanolamine + a 2-acyl-sn-glycero-3-phosphocholine + H(+). The enzyme catalyses 1-hexadecanoyl-2-(9Z-octadecenoyl)-sn-glycero-3-phosphocholine + 1,2-di-(9Z-octadecenoyl)-sn-glycero-3-phosphoethanolamine = N,1,2-tri-(9Z-octadecenoyl)-sn-glycero-3-phosphoethanolamine + 1-hexadecanoyl-sn-glycero-3-phosphocholine + H(+). Exhibits both phospholipase A1/2 and acyltransferase activities. Shows phospholipase A1 (PLA1) and A2 (PLA2) activity, catalyzing the calcium-independent release of fatty acids from the sn-1 or sn-2 position of glycerophospholipids. Shows N-acyltransferase activity, catalyzing the calcium-independent transfer of a fatty acyl group at the sn-1 position of phosphatidylcholine (PC) and other glycerophospholipids to the primary amine of phosphatidylethanolamine (PE), forming N-acylphosphatidylethanolamine (NAPE), which serves as precursor for N-acylethanolamines (NAEs). The polypeptide is Phospholipase A and acyltransferase 5 (Mus musculus (Mouse)).